The chain runs to 454 residues: Mediator of RNA polymerase II transcription subunit 1 (454 aa).

Belongs to the Mediator complex subunit 1 family. As to quaternary structure, component of the Mediator complex.

It localises to the nucleus. Functionally, component of the Mediator complex, a coactivator involved in the regulated transcription of nearly all RNA polymerase II-dependent genes. Mediator functions as a bridge to convey information from gene-specific regulatory proteins to the basal RNA polymerase II transcription machinery. Mediator is recruited to promoters by direct interactions with regulatory proteins and serves as a scaffold for the assembly of a functional preinitiation complex with RNA polymerase II and the general transcription factors. In Schizosaccharomyces pombe (strain 972 / ATCC 24843) (Fission yeast), this protein is Mediator of RNA polymerase II transcription subunit 1 (med1).